An 812-amino-acid polypeptide reads, in one-letter code: Phospholipase D alpha 2 (812 aa).

Residues 1–36 (MAQHLLHGTLHATIYEVDALHTGGLRSAGFLGKIIS) constitute a propeptide that is removed on maturation. One can recognise a C2 domain in the interval 1–127 (MAQHLLHGTL…INGEEVEKWV (127 aa)). The PLD phosphodiesterase 1 domain maps to 328 to 368 (AMFTHHQKIVVVDSEVPSQGGGSEMRRIMSFVGGIDLCDGR). Residues His333, Lys335, and Asp340 contribute to the active site. His333 contributes to the a 1,2-diacyl-sn-glycero-3-phosphate binding site. Residue His374 coordinates Ca(2+). The a 1,2-diacyl-sn-glycero-3-phosphate site is built by Gln524 and His663. Residues 658–685 (FMIYVHSKMMIVDDEYIIVGSANINQRS) form the PLD phosphodiesterase 2 domain. Catalysis depends on residues His663, Lys665, and Asp670. Glu724 is a binding site for Ca(2+).

The protein belongs to the phospholipase D family. C2-PLD subfamily. Ca(2+) serves as cofactor.

Its subcellular location is the cytoplasm. The protein resides in the membrane. The catalysed reaction is a 1,2-diacyl-sn-glycero-3-phosphocholine + H2O = a 1,2-diacyl-sn-glycero-3-phosphate + choline + H(+). Hydrolyzes glycerol-phospholipids at the terminal phosphodiesteric bond. Plays an important role in various cellular processes, including phytohormone action, vesicular trafficking, secretion, cytoskeletal arrangement, meiosis, tumor promotion, pathogenesis, membrane deterioration and senescence. The protein is Phospholipase D alpha 2 (PLD2) of Brassica oleracea var. capitata (Cabbage).